The primary structure comprises 134 residues: S-protein homolog 18 (134 aa).

A signal peptide spans 1–25 (MCPSSFRLILSVILIAFLFVGLCEA). The N-linked (GlcNAc...) asparagine glycan is linked to Asn-87.

It belongs to the plant self-incompatibility (S1) protein family.

It is found in the secreted. The sequence is that of S-protein homolog 18 from Arabidopsis thaliana (Mouse-ear cress).